We begin with the raw amino-acid sequence, 416 residues long: Ribulose bisphosphate carboxylase large chain (416 aa).

Residues asparagine 102 and threonine 152 each contribute to the substrate site. The Proton acceptor role is filled by lysine 154. Lysine 156 contacts substrate. 3 residues coordinate Mg(2+): lysine 180, aspartate 182, and glutamate 183. Lysine 180 carries the N6-carboxylysine modification. The active-site Proton acceptor is the histidine 273. Positions 274, 306, and 358 each coordinate substrate.

Belongs to the RuBisCO large chain family. Type I subfamily. Heterohexadecamer of 8 large chains and 8 small chains; disulfide-linked. The disulfide link is formed within the large subunit homodimers. Requires Mg(2+) as cofactor. Post-translationally, the disulfide bond which can form in the large chain dimeric partners within the hexadecamer appears to be associated with oxidative stress and protein turnover.

It localises to the plastid. It is found in the chloroplast. The catalysed reaction is 2 (2R)-3-phosphoglycerate + 2 H(+) = D-ribulose 1,5-bisphosphate + CO2 + H2O. The enzyme catalyses D-ribulose 1,5-bisphosphate + O2 = 2-phosphoglycolate + (2R)-3-phosphoglycerate + 2 H(+). RuBisCO catalyzes two reactions: the carboxylation of D-ribulose 1,5-bisphosphate, the primary event in carbon dioxide fixation, as well as the oxidative fragmentation of the pentose substrate in the photorespiration process. Both reactions occur simultaneously and in competition at the same active site. This Arthropteris beckleri (Fern) protein is Ribulose bisphosphate carboxylase large chain (rbcL).